We begin with the raw amino-acid sequence, 203 residues long: Ras-related protein Rab-7L1 (203 aa).

Positions 33, 34, 35, 36, 37, and 39 each coordinate GTP. The Effector region signature appears at 36 to 44; sequence YKSTVGVDF. Residue Thr-71 is modified to Phosphothreonine; by LRRK2. Position 72 is a phosphoserine; by LRRK2 (Ser-72). Positions 126, 156, and 157 each coordinate GTP. Residues Cys-202 and Cys-203 are each lipidated (S-geranylgeranyl cysteine).

It belongs to the small GTPase superfamily. Rab family. In terms of assembly, interacts with LRRK2 (via the N-terminus); this interaction is direct and stimulates kinase activity. In terms of processing, in case of Salmonella enterica serovar Typhimurium (S.typhimurium) infection, is proteolytically cleaved between Gly-41 and Val-42 by the GtgE viral protease encoded on the Gifsy-2 lysogen bacteriophage, which therefore prevents the recruitment of RAB29 to S.typhimurium-containing vacuoles. In contrast, no proteolytically cleavage is detected in S.typhi-infected cells. In terms of tissue distribution, ubiquitous.

It is found in the cell membrane. The protein resides in the cytoplasm. Its subcellular location is the perinuclear region. It localises to the golgi apparatus. The protein localises to the golgi apparatus membrane. It is found in the trans-Golgi network. The protein resides in the vacuole. Its subcellular location is the cytoskeleton. Its function is as follows. The small GTPases Rab are key regulators in vesicle trafficking. Essential for maintaining the integrity of the endosome-trans-Golgi network structure. Together with LRRK2, plays a role in the retrograde trafficking pathway for recycling proteins, such as mannose 6 phosphate receptor (M6PR), between lysosomes and the Golgi apparatus in a retromer-dependent manner. Recruits LRRK2 to the Golgi complex and stimulates LRRK2 kinase activity. Stimulates phosphorylation of RAB10 'Thr-73' by LRRK2. Regulates neuronal process morphology in the intact central nervous system (CNS). May play a role in the formation of typhoid toxin transport intermediates during Salmonella enterica serovar Typhi (S.typhi) epithelial cell infection. This chain is Ras-related protein Rab-7L1 (RAB29), found in Homo sapiens (Human).